A 252-amino-acid chain; its full sequence is Type II secretion system protein N (252 aa).

Over 1-4 (MKQK) the chain is Cytoplasmic. The chain crosses the membrane as a helical span at residues 5 to 25 (VLIAALFLVAYLGFLLVKLPA). The Periplasmic portion of the chain corresponds to 26–252 (TLVVRHLPLP…RFPLRYQGRI (227 aa)).

Belongs to the GSP N family.

Its subcellular location is the cell inner membrane. Its function is as follows. Involved in a type II secretion system (T2SS, formerly general secretion pathway, GSP) for the export of proteins. The polypeptide is Type II secretion system protein N (exeN) (Aeromonas hydrophila).